The sequence spans 136 residues: Succinate dehydrogenase 2 membrane subunit SdhC (136 aa).

A run of 3 helical transmembrane segments spans residues 32–52, 70–90, and 109–129; these read RISG…AAML, IVGL…LNGI, and LWII…VVGI. H85 serves as a coordination point for heme.

The protein belongs to the cytochrome b560 family. Part of an enzyme complex containing four subunits: a flavoprotein (SdhA), an iron-sulfur protein (SdhB), plus two membrane-anchoring proteins (SdhC and SdhD). It depends on heme as a cofactor.

The protein resides in the cell membrane. Membrane-anchoring subunit of succinate dehydrogenase 2 (Sdh2). Sdh2 may catalyze the two-electron oxidation of succinate to fumarate with a corresponding reduction of quinone to quinol under low oxygen conditions, when the primary aerobic succinate dehydrogenase (Sdh1) is inhibited. Sdh2 seems to be the generator of the proton motive force (PMF) under hypoxia. The protein is Succinate dehydrogenase 2 membrane subunit SdhC of Mycobacterium tuberculosis (strain ATCC 25618 / H37Rv).